The following is a 157-amino-acid chain: Vitamin K-dependent protein C (157 aa).

One can recognise a Peptidase S1 domain in the interval 1–157; sequence EKWELDLDIK…GCGRLHNYGV (157 aa). An N-linked (GlcNAc...) asparagine glycan is attached at Asn-17. Asp-26 functions as the Charge relay system in the catalytic mechanism. Residue Asn-78 is glycosylated (N-linked (GlcNAc...) asparagine). Cystine bridges form between Cys-96-Cys-110 and Cys-121-Cys-149. Ser-125 functions as the Charge relay system in the catalytic mechanism.

The protein belongs to the peptidase S1 family. As to expression, plasma; synthesized in the liver.

Its subcellular location is the secreted. The protein localises to the golgi apparatus. It localises to the endoplasmic reticulum. The enzyme catalyses Degradation of blood coagulation factors Va and VIIIa.. In terms of biological role, protein C is a vitamin K-dependent serine protease that regulates blood coagulation by inactivating factors Va and VIIIa in the presence of calcium ions and phospholipids. Exerts a protective effect on the endothelial cell barrier function. This Felis catus (Cat) protein is Vitamin K-dependent protein C (PROC).